The sequence spans 510 residues: ATP synthase subunit alpha, chloroplastic (510 aa).

170–177 (GDRQTGKT) serves as a coordination point for ATP.

Belongs to the ATPase alpha/beta chains family. As to quaternary structure, F-type ATPases have 2 components, CF(1) - the catalytic core - and CF(0) - the membrane proton channel. CF(1) has five subunits: alpha(3), beta(3), gamma(1), delta(1), epsilon(1). CF(0) has four main subunits: a, b, b' and c.

The protein localises to the plastid. Its subcellular location is the chloroplast thylakoid membrane. The catalysed reaction is ATP + H2O + 4 H(+)(in) = ADP + phosphate + 5 H(+)(out). In terms of biological role, produces ATP from ADP in the presence of a proton gradient across the membrane. The alpha chain is a regulatory subunit. This Phaseolus vulgaris (Kidney bean) protein is ATP synthase subunit alpha, chloroplastic.